The sequence spans 315 residues: 31 kDa ribonucleoprotein, chloroplastic (315 aa).

The N-terminal 71 residues, 1 to 71 (MSCATKPIIK…LSPKKKTSVS (71 aa)), are a transit peptide targeting the chloroplast. The tract at residues 114-133 (AGESDEVEADEEEEEFQEPP) is disordered. The segment covering 115 to 133 (GESDEVEADEEEEEFQEPP) has biased composition (acidic residues). 2 consecutive RRM domains span residues 136 to 214 (AKLF…KAAR) and 230 to 308 (YRIY…VAED).

It localises to the plastid. Its subcellular location is the chloroplast. Its function is as follows. Could be involved in splicing and/or processing of chloroplast RNA's. This chain is 31 kDa ribonucleoprotein, chloroplastic, found in Nicotiana sylvestris (Wood tobacco).